The sequence spans 642 residues: Acid beta-fructofuranosidase (642 aa).

Topologically, residues 1–22 (MRNDSPYTPLLNASHNNHRRRE) are cytoplasmic. A propeptide spans 1-95 (MRNDSPYTPL…LSGNLVGEGG (95 aa)) (removed in mature form). Residues 23-43 (LLLLFSGLLLLASIIAFSAYI) traverse the membrane as a helical; Signal-anchor for type II membrane protein segment. Residues 44-642 (AQPHADADVS…YHPDQKRQTS (599 aa)) lie on the Lumenal side of the membrane. An N-linked (GlcNAc...) asparagine glycan is attached at Asn-100. Substrate is bound by residues 119 to 122 (WMND), Gln-138, Trp-146, 181 to 182 (WT), and 245 to 246 (RD). The active site involves Asp-122. Asn-267 is a glycosylation site (N-linked (GlcNAc...) asparagine). Substrate is bound by residues Glu-300 and Asp-333. A disulfide bridge connects residues Cys-490 and Cys-538. Asn-491 and Asn-615 each carry an N-linked (GlcNAc...) asparagine glycan.

It belongs to the glycosyl hydrolase 32 family. In terms of assembly, may be present in two forms, a 70 kDa monomer and a heterodimer of the 30 kDa and 38 kDa subunits. The ratio of the levels of the two forms within cells appears to be regulated developmentally.

Its subcellular location is the membrane. The protein localises to the vacuole. It is found in the vacuole lumen. The enzyme catalyses Hydrolysis of terminal non-reducing beta-D-fructofuranoside residues in beta-D-fructofuranosides.. Its pathway is glycan biosynthesis; sucrose metabolism. This Vicia faba (Broad bean) protein is Acid beta-fructofuranosidase (VCINV).